Reading from the N-terminus, the 200-residue chain is Small ribosomal subunit protein uS4 (200 aa).

In terms of domain architecture, S4 RNA-binding spans 92–155 (SRLDAVVYSL…QNLDIIKESV (64 aa)).

The protein belongs to the universal ribosomal protein uS4 family. As to quaternary structure, part of the 30S ribosomal subunit. Contacts protein S5. The interaction surface between S4 and S5 is involved in control of translational fidelity.

Functionally, one of the primary rRNA binding proteins, it binds directly to 16S rRNA where it nucleates assembly of the body of the 30S subunit. With S5 and S12 plays an important role in translational accuracy. In Staphylococcus haemolyticus (strain JCSC1435), this protein is Small ribosomal subunit protein uS4.